Reading from the N-terminus, the 65-residue chain is MSKKAPAKEGKKLPRAATWYEIDMEKGVFRFKNKLCPKCGSVMAFHREPVPRWHCGKCGFTQFQR.

The Zn(2+) site is built by C36, C39, C55, and C58. The C4-type zinc-finger motif lies at 36 to 58 (CPKCGSVMAFHREPVPRWHCGKC).

The protein belongs to the eukaryotic ribosomal protein eS31 family. As to quaternary structure, part of the 30S ribosomal subunit. Zn(2+) is required as a cofactor.

This chain is Small ribosomal subunit protein eS31, found in Pyrobaculum calidifontis (strain DSM 21063 / JCM 11548 / VA1).